Here is a 350-residue protein sequence, read N- to C-terminus: Protein RecA (350 aa).

67–74 (GPESSGKT) is an ATP binding site.

The protein belongs to the RecA family.

Its subcellular location is the cytoplasm. Functionally, can catalyze the hydrolysis of ATP in the presence of single-stranded DNA, the ATP-dependent uptake of single-stranded DNA by duplex DNA, and the ATP-dependent hybridization of homologous single-stranded DNAs. It interacts with LexA causing its activation and leading to its autocatalytic cleavage. This chain is Protein RecA, found in Mycobacterium avium (strain 104).